A 271-amino-acid polypeptide reads, in one-letter code: Formamidopyrimidine-DNA glycosylase (271 aa).

Residue P2 is the Schiff-base intermediate with DNA of the active site. E3 (proton donor) is an active-site residue. K57 (proton donor; for beta-elimination activity) is an active-site residue. Positions 90, 109, and 151 each coordinate DNA. The FPG-type zinc-finger motif lies at 236 to 270 (HVYGRGGDTCTHCGQLLSEIRLGQRATVFCSICQQ). R260 functions as the Proton donor; for delta-elimination activity in the catalytic mechanism.

Belongs to the FPG family. Monomer. Zn(2+) serves as cofactor.

It catalyses the reaction Hydrolysis of DNA containing ring-opened 7-methylguanine residues, releasing 2,6-diamino-4-hydroxy-5-(N-methyl)formamidopyrimidine.. It carries out the reaction 2'-deoxyribonucleotide-(2'-deoxyribose 5'-phosphate)-2'-deoxyribonucleotide-DNA = a 3'-end 2'-deoxyribonucleotide-(2,3-dehydro-2,3-deoxyribose 5'-phosphate)-DNA + a 5'-end 5'-phospho-2'-deoxyribonucleoside-DNA + H(+). Functionally, involved in base excision repair of DNA damaged by oxidation or by mutagenic agents. Acts as a DNA glycosylase that recognizes and removes damaged bases. Has a preference for oxidized purines, such as 7,8-dihydro-8-oxoguanine (8-oxoG). Has AP (apurinic/apyrimidinic) lyase activity and introduces nicks in the DNA strand. Cleaves the DNA backbone by beta-delta elimination to generate a single-strand break at the site of the removed base with both 3'- and 5'-phosphates. The chain is Formamidopyrimidine-DNA glycosylase from Shewanella piezotolerans (strain WP3 / JCM 13877).